A 315-amino-acid chain; its full sequence is Tetratricopeptide repeat protein 23-like (315 aa).

Positions 28-56 (KIPEHQRTDESSPTSGSEESEEDTKAKEK) are disordered. Coiled coils occupy residues 65 to 90 (REKLAQSQKKIAQLIKGKKNIEANKE), 179 to 200 (REAYFNLQKSERNMKELRESYK), and 250 to 280 (SELVSLYQEIAQIEQLRRNHEQAIQYLHQAH).

It localises to the cytoplasm. The protein localises to the cytoskeleton. It is found in the microtubule organizing center. The protein resides in the centrosome. Its subcellular location is the spindle. It localises to the midbody. This chain is Tetratricopeptide repeat protein 23-like (TTC23L), found in Bos taurus (Bovine).